A 102-amino-acid polypeptide reads, in one-letter code: Small ribosomal subunit protein uS10 (102 aa).

The protein belongs to the universal ribosomal protein uS10 family. As to quaternary structure, part of the 30S ribosomal subunit.

In terms of biological role, involved in the binding of tRNA to the ribosomes. This Mycoplasma mobile (strain ATCC 43663 / 163K / NCTC 11711) (Mesomycoplasma mobile) protein is Small ribosomal subunit protein uS10.